Here is a 200-residue protein sequence, read N- to C-terminus: dTTP/UTP pyrophosphatase (200 aa).

The Proton acceptor role is filled by Asp81.

Belongs to the Maf family. YhdE subfamily. A divalent metal cation serves as cofactor.

Its subcellular location is the cytoplasm. It catalyses the reaction dTTP + H2O = dTMP + diphosphate + H(+). It carries out the reaction UTP + H2O = UMP + diphosphate + H(+). Functionally, nucleoside triphosphate pyrophosphatase that hydrolyzes dTTP and UTP. May have a dual role in cell division arrest and in preventing the incorporation of modified nucleotides into cellular nucleic acids. The chain is dTTP/UTP pyrophosphatase from Albidiferax ferrireducens (strain ATCC BAA-621 / DSM 15236 / T118) (Rhodoferax ferrireducens).